We begin with the raw amino-acid sequence, 455 residues long: tRNA modification GTPase MnmE (455 aa).

Residues Arg-25, Glu-85, and Arg-124 each contribute to the (6S)-5-formyl-5,6,7,8-tetrahydrofolate site. The 155-residue stretch at 221-375 (GLSTAIIGRP…IEERINKLFF (155 aa)) folds into the TrmE-type G domain. Asn-231 is a K(+) binding site. GTP is bound by residues 231–236 (NVGKSS), 250–256 (TDIEGTT), and 275–278 (DTAG). Ser-235 contributes to the Mg(2+) binding site. The K(+) site is built by Thr-250, Ile-252, and Thr-255. Position 256 (Thr-256) interacts with Mg(2+). Lys-455 contacts (6S)-5-formyl-5,6,7,8-tetrahydrofolate.

The protein belongs to the TRAFAC class TrmE-Era-EngA-EngB-Septin-like GTPase superfamily. TrmE GTPase family. In terms of assembly, homodimer. Heterotetramer of two MnmE and two MnmG subunits. Requires K(+) as cofactor.

The protein resides in the cytoplasm. Functionally, exhibits a very high intrinsic GTPase hydrolysis rate. Involved in the addition of a carboxymethylaminomethyl (cmnm) group at the wobble position (U34) of certain tRNAs, forming tRNA-cmnm(5)s(2)U34. The polypeptide is tRNA modification GTPase MnmE (Streptococcus mutans serotype c (strain ATCC 700610 / UA159)).